The chain runs to 251 residues: Coproheme decarboxylase (251 aa).

Residues arginine 133, 147 to 151 (YPMSK), histidine 174, glutamine 187, and serine 225 each bind Fe-coproporphyrin III. The active site involves tyrosine 147.

The protein belongs to the ChdC family. Type 1 subfamily. It depends on Fe-coproporphyrin III as a cofactor.

The catalysed reaction is Fe-coproporphyrin III + 2 H2O2 + 2 H(+) = heme b + 2 CO2 + 4 H2O. It catalyses the reaction Fe-coproporphyrin III + H2O2 + H(+) = harderoheme III + CO2 + 2 H2O. It carries out the reaction harderoheme III + H2O2 + H(+) = heme b + CO2 + 2 H2O. It participates in porphyrin-containing compound metabolism; protoheme biosynthesis. Functionally, involved in coproporphyrin-dependent heme b biosynthesis. Catalyzes the decarboxylation of Fe-coproporphyrin III (coproheme) to heme b (protoheme IX), the last step of the pathway. The reaction occurs in a stepwise manner with a three-propionate intermediate. This is Coproheme decarboxylase from Listeria monocytogenes serotype 4a (strain HCC23).